Here is an 869-residue protein sequence, read N- to C-terminus: Programmed cell death 6-interacting protein (869 aa).

Position 2 is an N-acetylalanine (Ala-2). Positions 3-392 (SFIWVQLKKT…AQMREATTLA (390 aa)) constitute a BRO1 domain. An interaction with CHMP4A, CHMP4B and CHMP4C region spans residues 176 to 503 (TVDISPDTVG…KFRAVLDKAV (328 aa)). Lys-215 carries the post-translational modification N6-acetyllysine. The interval 383-869 (AQMREATTLA…PPQQSYYPQQ (487 aa)) is interaction with SDCBP. The residue at position 479 (Thr-479) is a Phosphothreonine. Residue Ser-481 is modified to Phosphoserine. The segment at 503–869 (VQADGQVKER…PPQQSYYPQQ (367 aa)) is self-association. Disordered regions lie at residues 715 to 808 (REPS…PTYP) and 838 to 869 (YHQS…YPQQ). Residues 717–720 (PSAP) form an interaction with TSG101 region. Ser-730 carries the post-translational modification Phosphoserine. Positions 739 to 763 (PPTPAPRTMPPAKPQPPARPPPPVL) are enriched in pro residues. Thr-741 carries the post-translational modification Phosphothreonine. Arg-745 is modified (omega-N-methylarginine). The segment covering 764–787 (PANRVPPASAAAAPAGVGTASAAP) has biased composition (low complexity). 2 stretches are compositionally biased toward pro residues: residues 788–808 (PQTP…PTYP) and 845–861 (APYP…PQPP). Residues 798 to 807 (QAQGPPYPTY) are interaction with CEP55.

In terms of assembly, self-associates. Interacts with SH3KBP1. Interacts with PDCD6 in a calcium-dependent manner. Interacts with TSG101 in a calcium-dependent manner; PDCD6IP homooligomerization may be required for TSG101-binding. Interacts with SGSM3. Directly interacts with CHMP4A, CHMP4B and CHMP4C. Directly interacts with CEP55 in a 1:2 stoechiometry; this interaction is required for PDCD6IP targeting to the midbody. May interact with PDGFRB. Interacts with SH3GL1 and SH3GL2/endophilin-1. Forms a complex with SDCBP and SDC2. Found in a complex with F-actin, TJP1/ZO-1 and PARD3. Interacts with CD2AP. Interacts with ARRDC1. Interacts (via BRO1 domain) with the ATG12-ATG3 conjugat; this interaction is bridged by ATG12 and promotes multiple PDCD6IP-mediated functions such as endolysosomal trafficking, macroautophagy and exosome biogenesis. In terms of processing, may be phosphorylated on tyrosine residues by activated PDGFRB. Ubiquitously expressed. High expression in choroid plexus and low expression in cerebral cortex (at protein level).

Its subcellular location is the cytoplasm. The protein resides in the cytosol. It is found in the melanosome. The protein localises to the cytoskeleton. It localises to the microtubule organizing center. Its subcellular location is the centrosome. The protein resides in the secreted. It is found in the extracellular exosome. The protein localises to the cell junction. It localises to the tight junction. Its subcellular location is the midbody. The protein resides in the midbody ring. Multifunctional protein involved in endocytosis, multivesicular body biogenesis, membrane repair, cytokinesis, apoptosis and maintenance of tight junction integrity. Class E VPS protein involved in concentration and sorting of cargo proteins of the multivesicular body (MVB) for incorporation into intralumenal vesicles (ILVs) that are generated by invagination and scission from the limiting membrane of the endosome. Binds to the phospholipid lysobisphosphatidic acid (LBPA) which is abundant in MVBs internal membranes. The MVB pathway requires the sequential function of ESCRT-O, -I,-II and -III complexes. The ESCRT machinery also functions in topologically equivalent membrane fission events, such as the terminal stages of cytokinesis. Adapter for a subset of ESCRT-III proteins, such as CHMP4, to function at distinct membranes. Required for completion of cytokinesis. May play a role in the regulation of both apoptosis and cell proliferation. Regulates exosome biogenesis in concert with SDC1/4 and SDCBP. By interacting with F-actin, PARD3 and TJP1 secures the proper assembly and positioning of actomyosin-tight junction complex at the apical sides of adjacent epithelial cells that defines a spatial membrane domain essential for the maintenance of epithelial cell polarity and barrier. The sequence is that of Programmed cell death 6-interacting protein from Mus musculus (Mouse).